The sequence spans 141 residues: Putative pre-16S rRNA nuclease (141 aa).

It belongs to the YqgF nuclease family.

Its subcellular location is the cytoplasm. Could be a nuclease involved in processing of the 5'-end of pre-16S rRNA. This Syntrophomonas wolfei subsp. wolfei (strain DSM 2245B / Goettingen) protein is Putative pre-16S rRNA nuclease.